The chain runs to 480 residues: ATP synthase subunit beta (480 aa).

153 to 160 (GGAGVGKT) is an ATP binding site.

It belongs to the ATPase alpha/beta chains family. In terms of assembly, F-type ATPases have 2 components, CF(1) - the catalytic core - and CF(0) - the membrane proton channel. CF(1) has five subunits: alpha(3), beta(3), gamma(1), delta(1), epsilon(1). CF(0) has three main subunits: a(1), b(2) and c(9-12). The alpha and beta chains form an alternating ring which encloses part of the gamma chain. CF(1) is attached to CF(0) by a central stalk formed by the gamma and epsilon chains, while a peripheral stalk is formed by the delta and b chains.

It is found in the cell membrane. It catalyses the reaction ATP + H2O + 4 H(+)(in) = ADP + phosphate + 5 H(+)(out). Its function is as follows. Produces ATP from ADP in the presence of a proton gradient across the membrane. The catalytic sites are hosted primarily by the beta subunits. The protein is ATP synthase subunit beta of Lactobacillus johnsonii (strain CNCM I-12250 / La1 / NCC 533).